Reading from the N-terminus, the 266-residue chain is MIKYLQSHLEEQGYLFVTLPKPDLAPLQLLTEYKGHLEEYDGSLLDLFEPDGSPFPIRDRQLPNFSGQQLLQTDWSAGADLLHGLFKLFQQKEDKLKASLSGMKGLVLSFAYENIEEERVSEQALDNFLAGAMPKKEGFQRSVERLQDGELYVLTSVMRSNQFTVTIDCQREDQGKLEAAVAEIVDAHASIERKQSNSFSLQTEGEQAFVFACRAAQVLYNKKQWFQFWKKDKDGFRIEKREGMVVRGEEDFSVQPLQAPSGLLKL.

4 beta stranded membrane-spanning segments follow: residues 65–81 (FSGQ…GADL), 93–113 (EDKL…FAYE), 162–181 (QFTV…EAAV), and 187–203 (AHAS…SLQT). Positions 248-266 (GEEDFSVQPLQAPSGLLKL) are C-terminal region.

It belongs to the bacterial gasdermin family. Monomer. As to quaternary structure, forms large, homooligomeric ring-shaped pores when inserted in membranes.

It localises to the cytoplasm. The protein localises to the cell membrane. The full-length protein before cleavage is inactive: intramolecular interactions between the N-terminal domain and the C-terminal region mediate autoinhibition. The pyroptosis-like-inducing activity is carried by the released N-terminal domain (Gasdermin bGSDM, N-terminus). Its function is as follows. Precursor of a pore-forming protein involved in defense against bacteriophages. Cleavage of this precursor by its dedicated protease releases the active moiety (gasdermin bGSDM, N-terminus) which inserts into membranes, forming pores and triggering cell death. Expression of bGSDM and the neighboring protease gene (Ga0307981_100051430) is highly toxic in E.coli. Functionally, pore-forming protein that causes membrane permeabilization via a pyroptosis-like activity. This is the active form which makes ring-like pores with an interior pore diameter of 130-190 Angstroms, when integrated in liposomes. In Unknown prokaryotic organism, this protein is Gasdermin bGSDM.